Here is a 405-residue protein sequence, read N- to C-terminus: Probable tRNA sulfurtransferase (405 aa).

A THUMP domain is found at 60 to 165 (DKIDQRLKLV…QDAIYISNQL (106 aa)). ATP contacts are provided by residues 183–184 (ML), 208–209 (HF), Arg265, Gly287, and Gln296.

Belongs to the ThiI family.

It localises to the cytoplasm. It catalyses the reaction [ThiI sulfur-carrier protein]-S-sulfanyl-L-cysteine + a uridine in tRNA + 2 reduced [2Fe-2S]-[ferredoxin] + ATP + H(+) = [ThiI sulfur-carrier protein]-L-cysteine + a 4-thiouridine in tRNA + 2 oxidized [2Fe-2S]-[ferredoxin] + AMP + diphosphate. The enzyme catalyses [ThiS sulfur-carrier protein]-C-terminal Gly-Gly-AMP + S-sulfanyl-L-cysteinyl-[cysteine desulfurase] + AH2 = [ThiS sulfur-carrier protein]-C-terminal-Gly-aminoethanethioate + L-cysteinyl-[cysteine desulfurase] + A + AMP + 2 H(+). It participates in cofactor biosynthesis; thiamine diphosphate biosynthesis. In terms of biological role, catalyzes the ATP-dependent transfer of a sulfur to tRNA to produce 4-thiouridine in position 8 of tRNAs, which functions as a near-UV photosensor. Also catalyzes the transfer of sulfur to the sulfur carrier protein ThiS, forming ThiS-thiocarboxylate. This is a step in the synthesis of thiazole, in the thiamine biosynthesis pathway. The sulfur is donated as persulfide by IscS. The sequence is that of Probable tRNA sulfurtransferase from Lactobacillus gasseri (strain ATCC 33323 / DSM 20243 / BCRC 14619 / CIP 102991 / JCM 1131 / KCTC 3163 / NCIMB 11718 / NCTC 13722 / AM63).